Reading from the N-terminus, the 123-residue chain is Ribosome-binding factor A (123 aa).

Belongs to the RbfA family. Monomer. Binds 30S ribosomal subunits, but not 50S ribosomal subunits or 70S ribosomes.

It is found in the cytoplasm. One of several proteins that assist in the late maturation steps of the functional core of the 30S ribosomal subunit. Associates with free 30S ribosomal subunits (but not with 30S subunits that are part of 70S ribosomes or polysomes). Required for efficient processing of 16S rRNA. May interact with the 5'-terminal helix region of 16S rRNA. The polypeptide is Ribosome-binding factor A (Delftia acidovorans (strain DSM 14801 / SPH-1)).